A 71-amino-acid chain; its full sequence is uncharacterized protein (71 aa).

The signal sequence occupies residues 1–19 (MFLFPSLLSSFCITLRSIS).

This is an uncharacterized protein from Pasteurella multocida (strain Pm70).